We begin with the raw amino-acid sequence, 490 residues long: MTVRESAFVNGRWLAGGGVEFESLDPVTQDCLWKGAAASDDVVGQAVQAARQAFTSWGRLDVSRRIDIVKRFAELLEEDKERLADVIGKETSKPLWEARTEVASMVAKVGISIQAFNERTGVSEQDVAAGHAVLKHRPHGVLAVFGPYNFPGHLPNGHIVPALIAGNTIVFKPSELTPWFAEETVRIWAKAGLPDGVLNLVQGARETGVALAANDGIDGLLFTGSSPTGHSLHRQFGGRPEKILALEMGGNNPLIIAPPYDLKGAVHHTLFSAFVSAGQRCTCARRLLVPDTAEGQAFLDELIAAAANLQVGRYDADPQPFMGGVISLRARDQMLAAQNKLAAEGGRILLEMRSLEENASLLSPGVIDVTDVQELPDEEHFGPMLQVLRYRDFDHALELANKTGFGLAAGLISDSRDLYDRFWLEVRAGIVNWNKPLTGASSAAPFGGVGASGNHRPSAYYAADYCAYPVATLEADQAQAPAQLSPGMSL.

224 to 229 (GSSPTG) is a binding site for NAD(+). Active-site residues include Glu247 and Cys281.

The protein belongs to the aldehyde dehydrogenase family. AstD subfamily.

The catalysed reaction is N-succinyl-L-glutamate 5-semialdehyde + NAD(+) + H2O = N-succinyl-L-glutamate + NADH + 2 H(+). It participates in amino-acid degradation; L-arginine degradation via AST pathway; L-glutamate and succinate from L-arginine: step 4/5. Catalyzes the NAD-dependent reduction of succinylglutamate semialdehyde into succinylglutamate. This Hahella chejuensis (strain KCTC 2396) protein is N-succinylglutamate 5-semialdehyde dehydrogenase.